Here is a 149-residue protein sequence, read N- to C-terminus: 2S seed storage albumin protein (149 aa).

An N-terminal signal peptide occupies residues 1 to 22 (MKLFIILATATLLIAATQAKYL). Cystine bridges form between Cys-38–Cys-98, Cys-52–Cys-87, Cys-88–Cys-133, and Cys-100–Cys-140. No IgE-binding stretches follow at residues 41–53 (QVKM…VKCN), 68–81 (ALSR…ESEE), 84–95 (LRGCCVAMKEME), and 97–105 (ECVCEWMKM). Residues 108 to 117 (ENQKGRIGET) form an igE-binding region. The segment at 121-131 (KGIRDLKELPN) is no IgE-binding. The tract at residues 132–141 (KCGISEMECH) is igE-binding.

It belongs to the 2S seed storage albumins family. As to expression, expressed in seeds (at protein level). Expressed in seeds.

In terms of biological role, seed storage protein. The polypeptide is 2S seed storage albumin protein (Fagopyrum tataricum (Tartarian buckwheat)).